The sequence spans 96 residues: Protein transport protein Sec61 subunit beta (96 aa).

Residues 1-17 (MPGPTPSGTNVGSSGRS) show a composition bias toward polar residues. The segment at 1–54 (MPGPTPSGTNVGSSGRSPSKAVAARAAGSTVRQRKNASCGTRSAGRTTSAGTGG) is disordered. P2 carries the N-acetylproline modification. Residues 2–70 (PGPTPSGTNV…EDSPGLKVGP (69 aa)) are Cytoplasmic-facing. Position 7 is a phosphoserine (S7). The residue at position 9 (T9) is a Phosphothreonine. Residues S13, S14, and S17 each carry the phosphoserine modification. C39 carries S-palmitoyl cysteine lipidation. Positions 40–50 (GTRSAGRTTSA) are enriched in low complexity. Residues 71–91 (VPVLVMSLLFIAAVFMLHIWG) traverse the membrane as a helical segment.

Belongs to the SEC61-beta family. In terms of assembly, the SEC61 channel-forming translocon complex consists of channel-forming core components SEC61A1, SEC61B and SEC61G and different auxiliary components such as SEC62 and SEC63. The SEC61 channel associates with the multi-pass translocon (MPT) complex. Interacts with TRAM1.

It is found in the endoplasmic reticulum membrane. Component of SEC61 channel-forming translocon complex that mediates transport of signal peptide-containing precursor polypeptides across the endoplasmic reticulum (ER). Forms a ribosome receptor and a gated pore in the ER membrane, both functions required for cotranslational translocation of nascent polypeptides. The SEC61 channel is also involved in ER membrane insertion of transmembrane proteins: it mediates membrane insertion of the first few transmembrane segments of proteins, while insertion of subsequent transmembrane regions of multi-pass membrane proteins is mediated by the multi-pass translocon (MPT) complex. The SEC61 channel cooperates with the translocating protein TRAM1 to import nascent proteins into the ER. Required for PKD1/Polycystin-1 biogenesis. The polypeptide is Protein transport protein Sec61 subunit beta (Mus musculus (Mouse)).